Consider the following 397-residue polypeptide: Pyridinium-3,5-bisthiocarboxylic acid mononucleotide nickel insertion protein (397 aa).

It belongs to the LarC family.

It catalyses the reaction Ni(II)-pyridinium-3,5-bisthiocarboxylate mononucleotide = pyridinium-3,5-bisthiocarboxylate mononucleotide + Ni(2+). Functionally, involved in the biosynthesis of a nickel-pincer cofactor ((SCS)Ni(II) pincer complex). Binds Ni(2+), and functions in nickel delivery to pyridinium-3,5-bisthiocarboxylic acid mononucleotide (P2TMN), to form the mature cofactor. Is thus probably required for the activation of nickel-pincer cofactor-dependent enzymes. The polypeptide is Pyridinium-3,5-bisthiocarboxylic acid mononucleotide nickel insertion protein (Thermotoga petrophila (strain ATCC BAA-488 / DSM 13995 / JCM 10881 / RKU-1)).